Consider the following 121-residue polypeptide: uncharacterized protein (121 aa).

An N-terminal signal peptide occupies residues 1–19 (MKKFALATIFALATTSAFA).

The protein to E.coli YgiW.

The protein localises to the periplasm. This is an uncharacterized protein from Haemophilus influenzae (strain ATCC 51907 / DSM 11121 / KW20 / Rd).